The primary structure comprises 33 residues: Cytochrome b6-f complex subunit 7 (33 aa).

A helical membrane pass occupies residues 9–29; it reads AVICFTLTLIGLSLGFVLLKI.

This sequence belongs to the PetM family. As to quaternary structure, the 4 large subunits of the cytochrome b6-f complex are cytochrome b6, subunit IV (17 kDa polypeptide, PetD), cytochrome f and the Rieske protein, while the 4 small subunits are PetG, PetL, PetM and PetN. The complex functions as a dimer.

It is found in the plastid. Its subcellular location is the cyanelle thylakoid membrane. In terms of biological role, component of the cytochrome b6-f complex, which mediates electron transfer between photosystem II (PSII) and photosystem I (PSI), cyclic electron flow around PSI, and state transitions. The polypeptide is Cytochrome b6-f complex subunit 7 (Cyanophora paradoxa).